Consider the following 155-residue polypeptide: Phytohormone-binding protein CSBP (155 aa).

Trans-zeatin-binding positions include L22, Q67, E69, and 139-142 (TLMY). Residue Q67 participates in gibberellin A3 binding. T139 contacts gibberellin A3.

This sequence belongs to the BetVI family. In terms of assembly, monomer.

In terms of biological role, binds the cytokinin trans-zeatin in vitro. Binds gibberellin A3 (GA3) in vitro. This is Phytohormone-binding protein CSBP from Vigna radiata var. radiata (Mung bean).